We begin with the raw amino-acid sequence, 255 residues long: D-aminoacyl-tRNA deacylase (255 aa).

The protein belongs to the DtdA deacylase family. In terms of assembly, monomer. Zn(2+) is required as a cofactor.

The catalysed reaction is a D-aminoacyl-tRNA + H2O = a tRNA + a D-alpha-amino acid + H(+). It carries out the reaction glycyl-tRNA(Ala) + H2O = tRNA(Ala) + glycine + H(+). Functionally, D-aminoacyl-tRNA deacylase with broad substrate specificity. By recycling D-aminoacyl-tRNA to D-amino acids and free tRNA molecules, this enzyme counteracts the toxicity associated with the formation of D-aminoacyl-tRNA entities in vivo. The protein is D-aminoacyl-tRNA deacylase of Picrophilus torridus (strain ATCC 700027 / DSM 9790 / JCM 10055 / NBRC 100828 / KAW 2/3).